Reading from the N-terminus, the 541-residue chain is MAKIIAFDEEARRGLERGMNQLADAVKVTLGPKGRNVVLEKKWGAPTITNDGVSIAKEIELEDPYEKIGAELVKEVAKKTDDVAGDGTTTATVLAQALVREGLRNVAAGANPMALKRGIEKAVEAVSGALLEQAKDVETKEQIASTASISAADTQIGELIAEAMDKVGKEGVITVEESQTFGLELELTEGMRFDKGYISAYFATDMERMEASLDDPYILIANSKISSVKDLLPLLEKVMQSGKPLLIIAEDVEGEALSTLVVNKIRGTFKSVAVKAPGFGDRRKAMLGDIAILTGGEVISEEVGLKLENASIDLLGRARKVVITKDETTIVDGAGSADQVAGRVNQIRAEIENSDSDYDREKLQERLAKLAGGVAVIKAGAATEVELKERKHRIEDAVRNAKAAVEEGIVAGGGVALIQASSVFEKLELTGDEATGANAVRLALEAPLKQIAVNGGLEGGVIVEKVRNLPVGHGLNAATGEYVDMIAEGIIDPAKVTRSALQNAASIAALFLTTEAVIADKPEKAAAGGAPGGMPGGDMDF.

ATP is bound by residues 29-32 (TLGP), 86-90 (DGTTT), glycine 413, 476-478 (NAA), and aspartate 492.

Belongs to the chaperonin (HSP60) family. Forms a cylinder of 14 subunits composed of two heptameric rings stacked back-to-back. Interacts with the co-chaperonin GroES.

It is found in the cytoplasm. The enzyme catalyses ATP + H2O + a folded polypeptide = ADP + phosphate + an unfolded polypeptide.. Functionally, together with its co-chaperonin GroES, plays an essential role in assisting protein folding. The GroEL-GroES system forms a nano-cage that allows encapsulation of the non-native substrate proteins and provides a physical environment optimized to promote and accelerate protein folding. The polypeptide is Chaperonin GroEL 2 (Streptomyces avermitilis (strain ATCC 31267 / DSM 46492 / JCM 5070 / NBRC 14893 / NCIMB 12804 / NRRL 8165 / MA-4680)).